We begin with the raw amino-acid sequence, 270 residues long: Hairy and enhancer of split-related protein helt (270 aa).

Residues 1 to 24 are disordered; the sequence is MNARALYKRPPPVSSSQSEASGKR. One can recognise a bHLH domain in the interval 59–114; sequence KTPVSHKVIEKRRRDRINRCLNELGKTVPMALAKQNSGKLEKAEILEMTVQYLRAL. The Orange domain maps to 136–171; it reads FHYGYHECMKNLVHYLTTVERMETKDTKYARILAFL.

Belongs to the HEY family.

The protein resides in the nucleus. Functionally, transcriptional repressor which binds preferentially to the canonical E box sequence 5'-CACGCG-3'. The polypeptide is Hairy and enhancer of split-related protein helt (helt) (Danio rerio (Zebrafish)).